The sequence spans 308 residues: Maspardin (308 aa).

Positions 87–159 (FCDGFRKLLD…NSFWLMPAFM (73 aa)) constitute an AB hydrolase-1 domain. S304 carries the phosphoserine modification.

This sequence belongs to the AB hydrolase superfamily. In terms of assembly, interacts with CD4. Interacts with ALDH16A1. Expressed in all tissues tested, including heart, brain, placenta, lung, liver, skeletal muscle, kidney and pancreas. Expressed in J.CaM1.6, HuT 78 and HeLa cell lines (at protein level).

It localises to the cytoplasm. Its subcellular location is the cytosol. The protein resides in the membrane. The protein localises to the endosome membrane. It is found in the golgi apparatus. It localises to the trans-Golgi network membrane. In terms of biological role, may play a role as a negative regulatory factor in CD4-dependent T-cell activation. In Homo sapiens (Human), this protein is Maspardin (SPG21).